The primary structure comprises 648 residues: 1-deoxy-D-xylulose-5-phosphate synthase (648 aa).

Residues H79 and G120–A122 contribute to the thiamine diphosphate site. D152 contributes to the Mg(2+) binding site. Residues G153–S154, N181, F293, and E377 contribute to the thiamine diphosphate site. N181 is a Mg(2+) binding site.

Belongs to the transketolase family. DXPS subfamily. In terms of assembly, homodimer. Mg(2+) is required as a cofactor. The cofactor is thiamine diphosphate.

It carries out the reaction D-glyceraldehyde 3-phosphate + pyruvate + H(+) = 1-deoxy-D-xylulose 5-phosphate + CO2. It participates in metabolic intermediate biosynthesis; 1-deoxy-D-xylulose 5-phosphate biosynthesis; 1-deoxy-D-xylulose 5-phosphate from D-glyceraldehyde 3-phosphate and pyruvate: step 1/1. Functionally, catalyzes the acyloin condensation reaction between C atoms 2 and 3 of pyruvate and glyceraldehyde 3-phosphate to yield 1-deoxy-D-xylulose-5-phosphate (DXP). The sequence is that of 1-deoxy-D-xylulose-5-phosphate synthase from Bacteroides fragilis (strain ATCC 25285 / DSM 2151 / CCUG 4856 / JCM 11019 / LMG 10263 / NCTC 9343 / Onslow / VPI 2553 / EN-2).